The following is a 543-amino-acid chain: Chaperonin GroEL 1 (543 aa).

Residues 30–33, Lys-51, 87–91, Gly-415, and Asp-496 each bind ATP; these read TLGP and DGTTT.

The protein belongs to the chaperonin (HSP60) family. Forms a cylinder of 14 subunits composed of two heptameric rings stacked back-to-back. Interacts with the co-chaperonin GroES.

The protein resides in the cytoplasm. The enzyme catalyses ATP + H2O + a folded polypeptide = ADP + phosphate + an unfolded polypeptide.. Its function is as follows. Together with its co-chaperonin GroES, plays an essential role in assisting protein folding. The GroEL-GroES system forms a nano-cage that allows encapsulation of the non-native substrate proteins and provides a physical environment optimized to promote and accelerate protein folding. This chain is Chaperonin GroEL 1, found in Roseobacter denitrificans (strain ATCC 33942 / OCh 114) (Erythrobacter sp. (strain OCh 114)).